Here is a 158-residue protein sequence, read N- to C-terminus: Protein-export protein SecB (158 aa).

It belongs to the SecB family. As to quaternary structure, homotetramer, a dimer of dimers. One homotetramer interacts with 1 SecA dimer.

The protein resides in the cytoplasm. Its function is as follows. One of the proteins required for the normal export of preproteins out of the cell cytoplasm. It is a molecular chaperone that binds to a subset of precursor proteins, maintaining them in a translocation-competent state. It also specifically binds to its receptor SecA. The protein is Protein-export protein SecB of Photorhabdus laumondii subsp. laumondii (strain DSM 15139 / CIP 105565 / TT01) (Photorhabdus luminescens subsp. laumondii).